The following is a 319-amino-acid chain: NAP1-binding protein (319 aa).

The segment covering 34 to 43 (SALRSRRKQM) has biased composition (basic residues). A disordered region spans residues 34-74 (SALRSRRKQMRPTGKSVLKRPRKVTDRKTEEKIRTNRRKTP). Residues 56–67 (KVTDRKTEEKIR) show a composition bias toward basic and acidic residues. Phosphoserine is present on residues S251 and S260. The segment at 278–319 (EMQPLQENISPACPTPPYRSRETEKEDETLSPISVDFSSYLS) is disordered.

Interacts with NDC1 and MPS2.

This is NAP1-binding protein (NBP1) from Saccharomyces cerevisiae (strain ATCC 204508 / S288c) (Baker's yeast).